Reading from the N-terminus, the 196-residue chain is ATP-dependent Clp protease proteolytic subunit (196 aa).

The Nucleophile role is filled by Ser-98. His-123 is a catalytic residue.

The protein belongs to the peptidase S14 family. In terms of assembly, fourteen ClpP subunits assemble into 2 heptameric rings which stack back to back to give a disk-like structure with a central cavity, resembling the structure of eukaryotic proteasomes.

The protein localises to the cytoplasm. The enzyme catalyses Hydrolysis of proteins to small peptides in the presence of ATP and magnesium. alpha-casein is the usual test substrate. In the absence of ATP, only oligopeptides shorter than five residues are hydrolyzed (such as succinyl-Leu-Tyr-|-NHMec, and Leu-Tyr-Leu-|-Tyr-Trp, in which cleavage of the -Tyr-|-Leu- and -Tyr-|-Trp bonds also occurs).. Functionally, cleaves peptides in various proteins in a process that requires ATP hydrolysis. Has a chymotrypsin-like activity. Plays a major role in the degradation of misfolded proteins. The chain is ATP-dependent Clp protease proteolytic subunit from Actinobacillus pleuropneumoniae serotype 5b (strain L20).